Here is a 143-residue protein sequence, read N- to C-terminus: Sirohydrochlorin cobaltochelatase (143 aa).

The active-site Proton acceptor is the His9. His9 lines the Co(2+) pocket. His9 serves as a coordination point for Ni(2+). Substrate-binding positions include Glu45 and 70-75 (LAHGIH). Residue His75 participates in Co(2+) binding. His75 contributes to the Ni(2+) binding site.

It belongs to the CbiX family. CbiXS subfamily. As to quaternary structure, homotetramer; dimer of dimers.

The enzyme catalyses Co-sirohydrochlorin + 2 H(+) = sirohydrochlorin + Co(2+). It carries out the reaction Ni-sirohydrochlorin + 2 H(+) = sirohydrochlorin + Ni(2+). Its pathway is cofactor biosynthesis; adenosylcobalamin biosynthesis; cob(II)yrinate a,c-diamide from sirohydrochlorin (anaerobic route): step 1/10. Functionally, catalyzes the insertion of Co(2+) into sirohydrochlorin as part of the anaerobic pathway to cobalamin biosynthesis. Involved in the biosynthesis of the unique nickel-containing tetrapyrrole coenzyme F430, the prosthetic group of methyl-coenzyme M reductase (MCR), which plays a key role in methanogenesis and anaerobic methane oxidation. Catalyzes the insertion of Ni(2+) into sirohydrochlorin to yield Ni-sirohydrochlorin. In Methanocaldococcus jannaschii (strain ATCC 43067 / DSM 2661 / JAL-1 / JCM 10045 / NBRC 100440) (Methanococcus jannaschii), this protein is Sirohydrochlorin cobaltochelatase.